The primary structure comprises 172 residues: Lytic chitin monooxygenase (172 aa).

A signal peptide spans 1 to 30; the sequence is MHAGRKTAVLIGAALAPVIAVSLPAASASA. Cu cation-binding residues include histidine 31 and histidine 106. The Chitin-binding type-4 domain occupies 31–168; that stretch reads HGYISNPPSR…DNAFYACIDV (138 aa).

Cu(2+) serves as cofactor.

The protein resides in the secreted. The catalysed reaction is [(1-&gt;4)-N-acetyl-beta-D-glucosaminyl]n+m + reduced acceptor + O2 = [(1-&gt;4)-N-acetyl-beta-D-glucosaminyl]m-1-(1-&gt;4)-2-(acetylamino)-2-deoxy-D-glucono-1,5-lactone + [(1-&gt;4)-N-acetyl-beta-D-glucosaminyl]n + acceptor + H2O.. The protein operates within glycan degradation; chitin degradation. Functionally, involved in chitin degradation. Catalyzes the oxidative cleavage of glycosidic bonds in chitin via a copper-dependent mechanism, leading to oxidized chitooligomers with degrees of polymerization of 4-6. Is not active on cellulose. This chain is Lytic chitin monooxygenase, found in Streptomyces ambofaciens (strain ATCC 23877 / 3486 / DSM 40053 / JCM 4204 / NBRC 12836 / NRRL B-2516).